The chain runs to 328 residues: Delta-aminolevulinic acid dehydratase (328 aa).

The Zn(2+) site is built by Cys122, Cys124, and Cys132. The active-site Schiff-base intermediate with substrate is Lys197. Positions 207 and 219 each coordinate 5-aminolevulinate. Glu235 serves as a coordination point for Mg(2+). Lys250 serves as the catalytic Schiff-base intermediate with substrate. 5-aminolevulinate is bound by residues Ser276 and Tyr315.

It belongs to the ALAD family. Homooctamer. Zn(2+) is required as a cofactor.

It carries out the reaction 2 5-aminolevulinate = porphobilinogen + 2 H2O + H(+). It participates in porphyrin-containing compound metabolism; protoporphyrin-IX biosynthesis; coproporphyrinogen-III from 5-aminolevulinate: step 1/4. Functionally, catalyzes an early step in the biosynthesis of tetrapyrroles. Binds two molecules of 5-aminolevulinate per subunit, each at a distinct site, and catalyzes their condensation to form porphobilinogen. In Halalkalibacterium halodurans (strain ATCC BAA-125 / DSM 18197 / FERM 7344 / JCM 9153 / C-125) (Bacillus halodurans), this protein is Delta-aminolevulinic acid dehydratase (hemB).